Consider the following 215-residue polypeptide: Transcription factor LAX PANICLE 1 (215 aa).

Residues 1 to 48 form a disordered region; it reads MHDPRGFPIHPQPYHLHPTAGGLGEGRMRGGGRRRPGAKLSTDPQSVA. Positions 40-53 are basic motif; degenerate; it reads LSTDPQSVAARERR. The region spanning 40–89 is the bHLH domain; sequence LSTDPQSVAARERRHRISDRFRVLRSLVPGGSKMDTVSMLEQAIHYVKFL. The tract at residues 54 to 89 is helix-loop-helix motif; it reads HRISDRFRVLRSLVPGGSKMDTVSMLEQAIHYVKFL.

It belongs to the bHLH protein family. In terms of assembly, efficient DNA binding requires dimerization with another bHLH protein. Interacts with LAX2. As to expression, expressed in the boundary between the shoot apical meristem (SAM) and the region of new meristem formation.

It localises to the nucleus. Transcription factor that seems to regulate organogenesis in postembryonic development. Involved in the regulation of shoot branching by controlling axillary meristem initiation. Functions in association with LAX2 to regulate the process of AM formation. Possesses transactivation activity in yeast. The protein is Transcription factor LAX PANICLE 1 of Oryza sativa subsp. japonica (Rice).